A 542-amino-acid polypeptide reads, in one-letter code: Amino-acid acetyltransferase, mitochondrial (542 aa).

A mitochondrion-targeting transit peptide spans methionine 1–histidine 14. In terms of domain architecture, N-acetyltransferase spans alanine 368–aspartate 534.

It belongs to the acetyltransferase family.

It localises to the mitochondrion. It carries out the reaction L-glutamate + acetyl-CoA = N-acetyl-L-glutamate + CoA + H(+). It participates in amino-acid biosynthesis; L-arginine biosynthesis; N(2)-acetyl-L-ornithine from L-glutamate: step 1/4. Its function is as follows. N-acetylglutamate synthase involved in arginine biosynthesis. The polypeptide is Amino-acid acetyltransferase, mitochondrial (ARG2) (Eremothecium gossypii (strain ATCC 10895 / CBS 109.51 / FGSC 9923 / NRRL Y-1056) (Yeast)).